The primary structure comprises 374 residues: DNA primase small subunit PriS (374 aa).

Residues Asp99, Asp101, and Asp281 contribute to the active site.

Belongs to the eukaryotic-type primase small subunit family. Heterodimer of a small subunit (PriS) and a large subunit (PriL). Requires Mg(2+) as cofactor. Mn(2+) serves as cofactor.

In terms of biological role, catalytic subunit of DNA primase, an RNA polymerase that catalyzes the synthesis of short RNA molecules used as primers for DNA polymerase during DNA replication. The small subunit contains the primase catalytic core and has DNA synthesis activity on its own. Binding to the large subunit stabilizes and modulates the activity, increasing the rate of DNA synthesis while decreasing the length of the DNA fragments, and conferring RNA synthesis capability. The DNA polymerase activity may enable DNA primase to also catalyze primer extension after primer synthesis. May also play a role in DNA repair. In Methanoregula boonei (strain DSM 21154 / JCM 14090 / 6A8), this protein is DNA primase small subunit PriS.